Consider the following 539-residue polypeptide: GMP synthase [glutamine-hydrolyzing] (539 aa).

The Glutamine amidotransferase type-1 domain maps to 4–202 (KILILDFGSQ…VLQIAGAKPD (199 aa)). Cys81 acts as the Nucleophile in catalysis. Active-site residues include His176 and Glu178. The region spanning 203-395 (WIMKNHIEEA…LGLPPEMVYR (193 aa)) is the GMPS ATP-PPase domain. Position 230–236 (230–236 (SGGVDSS)) interacts with ATP.

In terms of assembly, homodimer.

The catalysed reaction is XMP + L-glutamine + ATP + H2O = GMP + L-glutamate + AMP + diphosphate + 2 H(+). The protein operates within purine metabolism; GMP biosynthesis; GMP from XMP (L-Gln route): step 1/1. In terms of biological role, catalyzes the synthesis of GMP from XMP. In Burkholderia orbicola (strain AU 1054), this protein is GMP synthase [glutamine-hydrolyzing].